We begin with the raw amino-acid sequence, 98 residues long: Pore-forming peptide amoebapore A (98 aa).

The signal sequence occupies residues 1–21; it reads MKAIVFVLIFAVAFAVTATHQ. Positions 22 to 98 constitute a Saposin B-type domain; it reads GEILCNLCTG…NAICAKIHAC (77 aa). 3 cysteine pairs are disulfide-bonded: Cys-26–Cys-98, Cys-29–Cys-92, and Cys-56–Cys-67.

In terms of assembly, monomer (at pH below 4 and pH above 6). Homodimer (at pH 4-6). Hexamer; formed during insertion in the membrane.

The protein resides in the cytoplasmic granule. Functionally, forms pores in the cell membrane of host cells. Has antibacterial activity against M.luteus, no activity against E.coli. Implicated in the cytolytic activity of the parasite. The chain is Pore-forming peptide amoebapore A from Entamoeba histolytica (strain ATCC 30459 / HM-1:IMSS / ABRM).